A 130-amino-acid polypeptide reads, in one-letter code: Larval cuticle protein 1 (130 aa).

An N-terminal signal peptide occupies residues 1–16 (MFKFVMICAVLGLAVA). One can recognise a Chitin-binding type R&amp;R domain in the interval 43–104 (ADGFDSSLHT…PSGAWIPTPP (62 aa)).

Its function is as follows. Component of the larval cuticle. The chain is Larval cuticle protein 1 (Lcp1) from Drosophila melanogaster (Fruit fly).